The primary structure comprises 333 residues: Glycerol-3-phosphate dehydrogenase [NAD(P)+] (333 aa).

Residues Y14, H34, and K108 each coordinate NADPH. Positions 108, 137, and 139 each coordinate sn-glycerol 3-phosphate. A141 is a binding site for NADPH. Residues K193, D247, S257, R258, and N259 each coordinate sn-glycerol 3-phosphate. The active-site Proton acceptor is K193. R258 lines the NADPH pocket. NADPH-binding residues include L282 and E284.

This sequence belongs to the NAD-dependent glycerol-3-phosphate dehydrogenase family.

Its subcellular location is the cytoplasm. The enzyme catalyses sn-glycerol 3-phosphate + NAD(+) = dihydroxyacetone phosphate + NADH + H(+). It carries out the reaction sn-glycerol 3-phosphate + NADP(+) = dihydroxyacetone phosphate + NADPH + H(+). The protein operates within membrane lipid metabolism; glycerophospholipid metabolism. In terms of biological role, catalyzes the reduction of the glycolytic intermediate dihydroxyacetone phosphate (DHAP) to sn-glycerol 3-phosphate (G3P), the key precursor for phospholipid synthesis. This chain is Glycerol-3-phosphate dehydrogenase [NAD(P)+], found in Blochmanniella floridana.